The following is a 344-amino-acid chain: Protein RecA (344 aa).

64–71 (GPESSGKT) contributes to the ATP binding site.

Belongs to the RecA family.

It is found in the cytoplasm. In terms of biological role, can catalyze the hydrolysis of ATP in the presence of single-stranded DNA, the ATP-dependent uptake of single-stranded DNA by duplex DNA, and the ATP-dependent hybridization of homologous single-stranded DNAs. It interacts with LexA causing its activation and leading to its autocatalytic cleavage. This is Protein RecA from Paramagnetospirillum magnetotacticum (Aquaspirillum magnetotacticum).